The primary structure comprises 287 residues: uncharacterized protein (287 aa).

This is an uncharacterized protein from Mycoplasma genitalium (strain ATCC 33530 / DSM 19775 / NCTC 10195 / G37) (Mycoplasmoides genitalium).